The following is a 1275-amino-acid chain: Rho1 guanine nucleotide exchange factor 3 (1275 aa).

Disordered regions lie at residues 1 to 42, 56 to 113, 131 to 188, and 214 to 248; these read MKLS…SFQK, SPPF…NSAA, NNPL…SPYS, and LSPT…VEYL. Positions 7-17 are enriched in basic and acidic residues; sequence LFHRSSKDHGG. 3 stretches are compositionally biased toward polar residues: residues 32 to 42, 80 to 113, and 142 to 151; these read PHSSSPPSFQK, ASIN…NSAA, and SPGNKQNTVD. Low complexity-rich tracts occupy residues 178–188 and 214–228; these read SSVSSHSSPYS and LSPT…SPIR. S293 carries the post-translational modification Phosphoserine. The DH domain maps to 465–657; that stretch reads ARQNNIHELI…RATCEECDAV (193 aa). The 164-residue stretch at 692 to 855 folds into the PH domain; sequence EFFFEGIVQR…WVEKINVAKK (164 aa). Residues 930–1239 form the CNH domain; it reads YGDISCIAQF…KYYPSNSDWL (310 aa).

It is found in the cytoplasm. Its function is as follows. Stimulates the exchange of Rho1 GDP-bound form into GTP-bound form. Regulates, via interaction and activation of Rho1, beta-1,3-glucan biosynthesis and cell wall integrity during septation. Involved in the regulation of contractile ring assembly. The chain is Rho1 guanine nucleotide exchange factor 3 (rgf3) from Schizosaccharomyces pombe (strain 972 / ATCC 24843) (Fission yeast).